The following is a 549-amino-acid chain: Undecaprenyl phosphate-alpha-4-amino-4-deoxy-L-arabinose arabinosyl transferase 1 (549 aa).

12 consecutive transmembrane segments (helical) span residues 9–29, 80–102, 112–132, 133–153, 176–196, 204–224, 257–277, 290–310, 312–332, 342–362, 377–397, and 402–422; these read LLLI…GLWI, LFGV…YLLA, SLAS…AGYA, NLDP…WFTF, FMTK…PYAI, LLIY…PWAL, WWYY…LLPA, SSGF…LSKG, LPAY…NTLV, LLAF…LALV, HLVL…LQAM, and LWAA…AALP.

The protein belongs to the glycosyltransferase 83 family.

It localises to the cell inner membrane. The catalysed reaction is 4-amino-4-deoxy-alpha-L-arabinopyranosyl di-trans,octa-cis-undecaprenyl phosphate + lipid IVA = lipid IIA + di-trans,octa-cis-undecaprenyl phosphate.. The protein operates within lipopolysaccharide metabolism; 4-amino-4-deoxy-beta-L-arabinose-lipid A biosynthesis. Functionally, catalyzes the transfer of the L-Ara4N moiety of the glycolipid undecaprenyl phosphate-alpha-L-Ara4N to lipid A. The modified arabinose is attached to lipid A and is required for resistance to polymyxin and cationic antimicrobial peptides. The protein is Undecaprenyl phosphate-alpha-4-amino-4-deoxy-L-arabinose arabinosyl transferase 1 of Pseudomonas fluorescens (strain ATCC BAA-477 / NRRL B-23932 / Pf-5).